The following is a 290-amino-acid chain: Small ribosomal subunit biogenesis GTPase RsgA (290 aa).

The CP-type G domain maps to 62–213 (KNSLVRPPIV…IADTPGFSSL (152 aa)). GTP contacts are provided by residues 111–114 (SKMD) and 156–164 (GQTGVGKST). Residues Cys237, Cys242, His244, and Cys250 each coordinate Zn(2+).

It belongs to the TRAFAC class YlqF/YawG GTPase family. RsgA subfamily. As to quaternary structure, monomer. Associates with 30S ribosomal subunit, binds 16S rRNA. The cofactor is Zn(2+).

It is found in the cytoplasm. One of several proteins that assist in the late maturation steps of the functional core of the 30S ribosomal subunit. Helps release RbfA from mature subunits. May play a role in the assembly of ribosomal proteins into the subunit. Circularly permuted GTPase that catalyzes slow GTP hydrolysis, GTPase activity is stimulated by the 30S ribosomal subunit. This Streptococcus pyogenes serotype M6 (strain ATCC BAA-946 / MGAS10394) protein is Small ribosomal subunit biogenesis GTPase RsgA.